A 244-amino-acid polypeptide reads, in one-letter code: Ribosome-inactivating protein cucurmosin (244 aa).

Residues Tyr-70, Tyr-109, Glu-158, and Arg-161 contribute to the active site. N-linked (GlcNAc...) asparagine glycans are attached at residues Asn-189 and Asn-225.

It belongs to the ribosome-inactivating protein family. Type 1 RIP subfamily. Post-translationally, the N-linked glycan consists of GlcNAc2Man3Xyl.

It carries out the reaction Endohydrolysis of the N-glycosidic bond at one specific adenosine on the 28S rRNA.. Its function is as follows. Has cytotoxic activity towards cancer cells, but not normal cells. Inhibits the growth of the human leukemia cell line K562, the murine melanoma cell line B16 and the lung adenocarcinoma cell line A549 with IC(50) values of 88.1 nM, 63.4 nM and 359.3 nM respectively. This Cucurbita moschata (Winter crookneck squash) protein is Ribosome-inactivating protein cucurmosin.